We begin with the raw amino-acid sequence, 170 residues long: Myosin regulatory light chain 2, skeletal muscle isoform (170 aa).

Ala-2 is modified (n,N,N-trimethylalanine). 2 positions are modified to phosphoserine: Ser-16 and Ser-17. 2 positions are modified to phosphothreonine: Thr-26 and Thr-36. Residues 26–61 (TQIQEFKEAFTVIDQNRDGIIDKEDLRDTFAAMGRL) enclose the EF-hand 1 domain. Ca(2+)-binding residues include Asp-39, Asn-41, Asp-43, and Asp-50. Ser-76 bears the Phosphoserine mark. EF-hand domains follow at residues 96 to 131 (DPED…QCDR) and 132 to 167 (FSQE…GDAK). Thr-102 is subject to Phosphothreonine.

As to quaternary structure, myosin is a hexamer of 2 heavy chains and 4 light chains.

Plays a role in muscle contraction. The chain is Myosin regulatory light chain 2, skeletal muscle isoform from Bos taurus (Bovine).